The following is a 321-amino-acid chain: Olfactory receptor 5P60 (321 aa).

Residues 1–28 are Extracellular-facing; it reads MAFLHNGNHTAVTEFILLGLTDDPVLRI. Residue Asn-8 is glycosylated (N-linked (GlcNAc...) asparagine). A helical membrane pass occupies residues 29–49; sequence VLFTIILCIYLVTVSGNLSTI. The Cytoplasmic portion of the chain corresponds to 50-57; sequence LLIRVSSQ. Residues 58-78 traverse the membrane as a helical segment; that stretch reads LHHPMYFFLSHLASADIGYSS. Residues 79–102 are Extracellular-facing; the sequence is SVTPNMLVNFLVKQNTISYIGCSI. The cysteines at positions 100 and 192 are disulfide-linked. A helical membrane pass occupies residues 103-123; that stretch reads QFGSAAFFGGLECFLLAVMAY. Residues 124–136 lie on the Cytoplasmic side of the membrane; it reads DRFVAICNPLLYS. The chain crosses the membrane as a helical span at residues 137–157; sequence TKMSTQVCVQLVVGSYIGGFL. Over 158 to 199 the chain is Extracellular; it reads NASFATVSFLFLFFCGPNIINHFFCDFAPLIELSCSDVRISV. Residues 200 to 220 form a helical membrane-spanning segment; the sequence is LVTSFSAGTVTMLTVLVIAIS. Over 221 to 240 the chain is Cytoplasmic; that stretch reads YTYILITILKMRSTEGRHKA. Residues 241-261 traverse the membrane as a helical segment; it reads FSTCTSHLTAVSLFYGTITFI. At 262 to 274 the chain is on the extracellular side; sequence YVMPKSRYSTDQN. A helical membrane pass occupies residues 275–295; that stretch reads KVVSVFYMVVIPMLNPLIYSL. Topologically, residues 296-321 are cytoplasmic; the sequence is RNNEIKGALRRHLGKKIFSQSNILFY.

It belongs to the G-protein coupled receptor 1 family.

Its subcellular location is the cell membrane. In terms of biological role, potential odorant receptor. In Mus musculus (Mouse), this protein is Olfactory receptor 5P60.